The chain runs to 171 residues: Ribosome maturation factor RimM (171 aa).

The PRC barrel domain occupies 96-170 (PDSYYHFQLE…TMTVRLPDGL (75 aa)).

The protein belongs to the RimM family. As to quaternary structure, binds ribosomal protein uS19.

It is found in the cytoplasm. In terms of biological role, an accessory protein needed during the final step in the assembly of 30S ribosomal subunit, possibly for assembly of the head region. Essential for efficient processing of 16S rRNA. May be needed both before and after RbfA during the maturation of 16S rRNA. It has affinity for free ribosomal 30S subunits but not for 70S ribosomes. The polypeptide is Ribosome maturation factor RimM (Heliobacterium modesticaldum (strain ATCC 51547 / Ice1)).